We begin with the raw amino-acid sequence, 110 residues long: MTASTVALALFVASILGHCWVTANSTGVASSTERSSPSTAGLSARPSPGPTSVTTPGFYDVACSADSFSPSLSSFSSVWALINALLVVVATFFYLVYLCFFKFVDEVVHA.

A signal peptide spans 1-17 (MTASTVALALFVASILG). Topologically, residues 18 to 80 (HCWVTANSTG…SLSSFSSVWA (63 aa)) are virion surface. Positions 28–41 (VASSTERSSPSTAG) are enriched in polar residues. The interval 28 to 51 (VASSTERSSPSTAGLSARPSPGPT) is disordered. The helical transmembrane segment at 81-101 (LINALLVVVATFFYLVYLCFF) threads the bilayer. Over 102–110 (KFVDEVVHA) the chain is Intravirion.

The protein belongs to the herpesviridae glycoprotein N family. Interacts (via N-terminus) with gM (via N-terminus). The gM-gN heterodimer forms the gCII complex. O-glycosylated. Contains alpha 2,6-sialic acid residues. N-glycosylated.

It localises to the virion membrane. Its subcellular location is the host membrane. The protein resides in the host Golgi apparatus. It is found in the host trans-Golgi network. In terms of biological role, envelope glycoprotein necessary for proper maturation of gM and modulation of its membrane fusion activity. Also plays a critical role in virion morphogenesis. The chain is Envelope glycoprotein N from Homo sapiens (Human).